Reading from the N-terminus, the 372-residue chain is Tribbles homolog 1 (372 aa).

Disordered stretches follow at residues 1 to 23 (MRVG…ALLF) and 52 to 86 (ECSS…GSAP). Positions 59–75 (YLSPPGSPCSPQPPPAA) are enriched in pro residues. The region spanning 91-338 (IADYLLLPLA…APEILLHPWF (248 aa)) is the Protein kinase domain. Positions 355–360 (DQIVPE) match the COP1-binding motif.

The protein belongs to the protein kinase superfamily. CAMK Ser/Thr protein kinase family. Tribbles subfamily. As to quaternary structure, monomer. Interacts (via protein kinase domain) with CEBPA. Interacts with COP1. As to expression, expressed in most human tissues with the highest levels in skeletal muscle, thyroid gland, pancreas, peripheral blood leukocytes, and bone marrow.

Its function is as follows. Adapter protein involved in protein degradation by interacting with COP1 ubiquitin ligase. The COP1-binding motif is masked by autoinhibitory interactions with the protein kinase domain. Serves to alter COP1 substrate specificity by directing the activity of COP1 toward CEBPA. Binds selectively the recognition sequence of CEBPA. Regulates myeloid cell differentiation by altering the expression of CEBPA in a COP1-dependent manner. Controls macrophage, eosinophil and neutrophil differentiation via the COP1-binding domain. Interacts with MAPK kinases and regulates activation of MAP kinases, but has no kinase activity. The sequence is that of Tribbles homolog 1 from Homo sapiens (Human).